Reading from the N-terminus, the 708-residue chain is Metal-pseudopaline receptor CntO (708 aa).

An N-terminal signal peptide occupies residues 1 to 21 (MRVSVSLVLGVGLGCSSPALW). Positions 63-169 (RIEDIPQAIS…PGGTVNLVTK (107 aa)) constitute a TBDR plug domain. The region spanning 174–708 (ERFARLHASA…NLTMSLTLNY (535 aa)) is the TBDR beta-barrel domain.

This sequence belongs to the TonB-dependent receptor family.

Its subcellular location is the cell outer membrane. In terms of biological role, transports the metallophore pseudopaline, which is involved in the acquisition of nickel and zinc, and thus enables bacterial growth inside the host, where metal access is limited. Is probably involved in the import of pseudopaline-metal complexes. This chain is Metal-pseudopaline receptor CntO, found in Pseudomonas aeruginosa (strain UCBPP-PA14).